A 486-amino-acid chain; its full sequence is 23S rRNA (uracil(1939)-C(5))-methyltransferase RlmD (486 aa).

A TRAM domain is found at threonine 10–alanine 71. 4 residues coordinate [4Fe-4S] cluster: cysteine 84, cysteine 94, cysteine 97, and cysteine 176. S-adenosyl-L-methionine contacts are provided by glutamine 285, phenylalanine 314, asparagine 319, glutamate 335, asparagine 370, and aspartate 391. Cysteine 442 acts as the Nucleophile in catalysis.

Belongs to the class I-like SAM-binding methyltransferase superfamily. RNA M5U methyltransferase family. RlmD subfamily.

The catalysed reaction is uridine(1939) in 23S rRNA + S-adenosyl-L-methionine = 5-methyluridine(1939) in 23S rRNA + S-adenosyl-L-homocysteine + H(+). Its function is as follows. Catalyzes the formation of 5-methyl-uridine at position 1939 (m5U1939) in 23S rRNA. The chain is 23S rRNA (uracil(1939)-C(5))-methyltransferase RlmD from Polaromonas sp. (strain JS666 / ATCC BAA-500).